The sequence spans 189 residues: Molybdopterin synthase catalytic subunit (189 aa).

Residues 1 to 30 (MSSLEISNSCFSPETRSPSSRQSVEDNASE) show a composition bias toward polar residues. The tract at residues 1–41 (MSSLEISNSCFSPETRSPSSRQSVEDNASEPSGKDVDDVQE) is disordered. Serine 20 is modified (phosphoserine). The segment covering 32–41 (SGKDVDDVQE) has biased composition (basic and acidic residues). Residues 143–144 (HR), lysine 159, and 166–168 (KKE) contribute to the substrate site.

Belongs to the MoaE family. MOCS2B subfamily. Heterotetramer; composed of 2 small (MOCS2A) and 2 large (MOCS2B) subunits.

It is found in the cytoplasm. Its subcellular location is the cytosol. It carries out the reaction 2 [molybdopterin-synthase sulfur-carrier protein]-C-terminal-Gly-aminoethanethioate + cyclic pyranopterin phosphate + H2O = molybdopterin + 2 [molybdopterin-synthase sulfur-carrier protein]-C-terminal Gly-Gly + 2 H(+). It participates in cofactor biosynthesis; molybdopterin biosynthesis. Functionally, catalytic subunit of the molybdopterin synthase complex, a complex that catalyzes the conversion of precursor Z into molybdopterin. Acts by mediating the incorporation of 2 sulfur atoms from thiocarboxylated MOCS2A into precursor Z to generate a dithiolene group. The protein is Molybdopterin synthase catalytic subunit of Mus musculus (Mouse).